A 213-amino-acid polypeptide reads, in one-letter code: MSRNSYIQQSSDIQAAGGLVPMVIEQSARGERAYDIYSRLLKERVIFLVGPVEDYMANLVVAQLLFLEAENPDKDIHLYINSPGGSVTAGMSIYDTMQFIKPDVSTICIGQACSMGAFLLAAGAAGKRHCLPNSRVMIHQPLGGFQGQATDIEIHAQEILNIKARLNELLAHHTGQSLETIKRDTERDNFMSAARAAEYGLIDSVYDKRQLAS.

Serine 114 acts as the Nucleophile in catalysis. The active site involves histidine 139.

It belongs to the peptidase S14 family. In terms of assembly, fourteen ClpP subunits assemble into 2 heptameric rings which stack back to back to give a disk-like structure with a central cavity, resembling the structure of eukaryotic proteasomes.

It localises to the cytoplasm. The catalysed reaction is Hydrolysis of proteins to small peptides in the presence of ATP and magnesium. alpha-casein is the usual test substrate. In the absence of ATP, only oligopeptides shorter than five residues are hydrolyzed (such as succinyl-Leu-Tyr-|-NHMec, and Leu-Tyr-Leu-|-Tyr-Trp, in which cleavage of the -Tyr-|-Leu- and -Tyr-|-Trp bonds also occurs).. Functionally, cleaves peptides in various proteins in a process that requires ATP hydrolysis. Has a chymotrypsin-like activity. Plays a major role in the degradation of misfolded proteins. In Pseudomonas entomophila (strain L48), this protein is ATP-dependent Clp protease proteolytic subunit.